A 292-amino-acid polypeptide reads, in one-letter code: Oxidative stress-responsive serine-rich protein 1 (292 aa).

The segment at 27–175 (SIASLSVGEG…SSDATQVSQA (149 aa)) is disordered. Positions 65–83 (STRKSSRGVVRTQRRRRSK) are enriched in basic residues. T143 and T233 each carry phosphothreonine.

This Pongo abelii (Sumatran orangutan) protein is Oxidative stress-responsive serine-rich protein 1 (OSER1).